Here is a 433-residue protein sequence, read N- to C-terminus: ATP-dependent protease ATPase subunit HslU (433 aa).

ATP-binding positions include V18, 60–65 (GVGKTE), D246, E311, and R383.

Belongs to the ClpX chaperone family. HslU subfamily. In terms of assembly, a double ring-shaped homohexamer of HslV is capped on each side by a ring-shaped HslU homohexamer. The assembly of the HslU/HslV complex is dependent on binding of ATP.

Its subcellular location is the cytoplasm. In terms of biological role, ATPase subunit of a proteasome-like degradation complex; this subunit has chaperone activity. The binding of ATP and its subsequent hydrolysis by HslU are essential for unfolding of protein substrates subsequently hydrolyzed by HslV. HslU recognizes the N-terminal part of its protein substrates and unfolds these before they are guided to HslV for hydrolysis. In Rhodopseudomonas palustris (strain BisA53), this protein is ATP-dependent protease ATPase subunit HslU.